The following is a 344-amino-acid chain: MTLASTMPIIYSASDAAKWKVAVSPYLYQLSNLKLLFTGKLNFADFYYNTNPFVVGLLLSFILGNVLWGVSVWTKNTSQVDRLWPILPTAFSLHFLFYGLGYNIASRRLMIMAFLQTLWSARLTYNYYRKGGYNRGAEDYRWVRVRQIMPKWIYPLFHYFYIHIFQVLHLYLLASPTYIAMLAGNERAFGAWDWIALELFMFMFVLEMLADQQQWDYYEARNHYNVDKTVPPRFKYDLLSLGRGFNATGLFRWSRHPNFLAEQLIWLSFYLFGAIASESLLNWTIFAWLGLVGVFQGSTRLTEKMSCEKYPLYRVYQDKVGRFFPRLDGSHWDIVDDDASLKED.

Transmembrane regions (helical) follow at residues 53-73 (FVVG…VSVW), 84-104 (WPIL…GYNI), 153-173 (IYPL…LYLL), 189-209 (FGAW…LEML), and 275-295 (IASE…VGVF).

Belongs to the steroid 5-alpha reductase family.

The protein resides in the endoplasmic reticulum membrane. This is an uncharacterized protein from Schizosaccharomyces pombe (strain 972 / ATCC 24843) (Fission yeast).